Reading from the N-terminus, the 295-residue chain is Ribosomal RNA small subunit methyltransferase A (295 aa).

Residues asparagine 29, leucine 31, glycine 56, glutamate 77, aspartate 102, and asparagine 128 each contribute to the S-adenosyl-L-methionine site.

This sequence belongs to the class I-like SAM-binding methyltransferase superfamily. rRNA adenine N(6)-methyltransferase family. RsmA subfamily.

It is found in the cytoplasm. It carries out the reaction adenosine(1518)/adenosine(1519) in 16S rRNA + 4 S-adenosyl-L-methionine = N(6)-dimethyladenosine(1518)/N(6)-dimethyladenosine(1519) in 16S rRNA + 4 S-adenosyl-L-homocysteine + 4 H(+). Specifically dimethylates two adjacent adenosines (A1518 and A1519) in the loop of a conserved hairpin near the 3'-end of 16S rRNA in the 30S particle. May play a critical role in biogenesis of 30S subunits. The sequence is that of Ribosomal RNA small subunit methyltransferase A from Listeria monocytogenes serotype 4b (strain CLIP80459).